The following is a 251-amino-acid chain: MVDKSQETTHFGFQTVAKEQKADMVAHVFHSVASKYDVMNDLMSFGIHRLWKRFTIDCSGVRRGQTVLDLAGGTGDLTAKFSRLVGETGKVVLADINESMLKMGREKLRNIGVIGNVEYVQANAEALPFPDNTFDCITISFGLRNVTDKDKALRSMYRVLKPGGRLLVLEFSKPIIEPLSKAYDAYSFHVLPRIGSLVANDADSYRYLAESIRMHPDQDTLKTMMQDAGFESVDYYNLTAGVVALHRGYKF.

Residues T74, D95, 123-124, and S140 each bind S-adenosyl-L-methionine; that span reads NA.

This sequence belongs to the class I-like SAM-binding methyltransferase superfamily. MenG/UbiE family.

The enzyme catalyses a 2-demethylmenaquinol + S-adenosyl-L-methionine = a menaquinol + S-adenosyl-L-homocysteine + H(+). It carries out the reaction a 2-methoxy-6-(all-trans-polyprenyl)benzene-1,4-diol + S-adenosyl-L-methionine = a 5-methoxy-2-methyl-3-(all-trans-polyprenyl)benzene-1,4-diol + S-adenosyl-L-homocysteine + H(+). It functions in the pathway quinol/quinone metabolism; menaquinone biosynthesis; menaquinol from 1,4-dihydroxy-2-naphthoate: step 2/2. It participates in cofactor biosynthesis; ubiquinone biosynthesis. In terms of biological role, methyltransferase required for the conversion of demethylmenaquinol (DMKH2) to menaquinol (MKH2) and the conversion of 2-polyprenyl-6-methoxy-1,4-benzoquinol (DDMQH2) to 2-polyprenyl-3-methyl-6-methoxy-1,4-benzoquinol (DMQH2). This Escherichia coli O1:K1 / APEC protein is Ubiquinone/menaquinone biosynthesis C-methyltransferase UbiE.